A 316-amino-acid chain; its full sequence is MQILLANPRGFCAGVDRAISIVENALTLYGAPIYVRHEVVHNRYVVDSLRKRGAIFIEQISEVPDGAILIFSAHGVSQAVRNEAKSRDLTVFDATCPLVTKVHMEVARASRRGEESILIGHAGHPEVEGTMGQYNNPQGGMYLVESPEDVLKLEVKNDARLSFMTQTTLSVDDTSDVIDALRARFPKIVGPRKDDICYATTNRQEAVRALAEQADVVLVVGSKNSSNSNRLAELAQRMGKAAYLIDDASDIQEAWVKDAACVGVTAGASAPDILVQNVITRLQELGGGEAVPLEGREENIVFEVPKELRVDVREVE.

Residue Cys12 coordinates [4Fe-4S] cluster. (2E)-4-hydroxy-3-methylbut-2-enyl diphosphate-binding residues include His41 and His74. Residues His41 and His74 each coordinate dimethylallyl diphosphate. Residues His41 and His74 each contribute to the isopentenyl diphosphate site. A [4Fe-4S] cluster-binding site is contributed by Cys96. His124 contributes to the (2E)-4-hydroxy-3-methylbut-2-enyl diphosphate binding site. His124 is a binding site for dimethylallyl diphosphate. Isopentenyl diphosphate is bound at residue His124. The active-site Proton donor is the Glu126. Thr167 provides a ligand contact to (2E)-4-hydroxy-3-methylbut-2-enyl diphosphate. [4Fe-4S] cluster is bound at residue Cys197. Ser225, Ser226, Asn227, and Ser269 together coordinate (2E)-4-hydroxy-3-methylbut-2-enyl diphosphate. Dimethylallyl diphosphate is bound by residues Ser225, Ser226, Asn227, and Ser269. Positions 225, 226, 227, and 269 each coordinate isopentenyl diphosphate.

The protein belongs to the IspH family. Homodimer. [4Fe-4S] cluster is required as a cofactor.

The catalysed reaction is isopentenyl diphosphate + 2 oxidized [2Fe-2S]-[ferredoxin] + H2O = (2E)-4-hydroxy-3-methylbut-2-enyl diphosphate + 2 reduced [2Fe-2S]-[ferredoxin] + 2 H(+). The enzyme catalyses dimethylallyl diphosphate + 2 oxidized [2Fe-2S]-[ferredoxin] + H2O = (2E)-4-hydroxy-3-methylbut-2-enyl diphosphate + 2 reduced [2Fe-2S]-[ferredoxin] + 2 H(+). It participates in isoprenoid biosynthesis; dimethylallyl diphosphate biosynthesis; dimethylallyl diphosphate from (2E)-4-hydroxy-3-methylbutenyl diphosphate: step 1/1. Its pathway is isoprenoid biosynthesis; isopentenyl diphosphate biosynthesis via DXP pathway; isopentenyl diphosphate from 1-deoxy-D-xylulose 5-phosphate: step 6/6. Its function is as follows. Catalyzes the conversion of 1-hydroxy-2-methyl-2-(E)-butenyl 4-diphosphate (HMBPP) into a mixture of isopentenyl diphosphate (IPP) and dimethylallyl diphosphate (DMAPP). Acts in the terminal step of the DOXP/MEP pathway for isoprenoid precursor biosynthesis. In Klebsiella pneumoniae (strain 342), this protein is 4-hydroxy-3-methylbut-2-enyl diphosphate reductase.